The primary structure comprises 116 residues: Type IV narrow pilus major component PilA5 (116 aa).

Positions 1 to 5 (MRAKG) are cleaved as a propeptide — leader sequence. Phe6 carries the N-methylphenylalanine modification. A helical transmembrane segment spans residues 6–26 (FTLIELAIVIVIIGILVAIAV).

Post-translationally, glycosylated.

It localises to the cell inner membrane. The protein resides in the cell outer membrane. It is found in the periplasm. Plays an essential role in forming the main structure of the narrow T4P pili that participates in twitching motility. In Thermus thermophilus (strain ATCC BAA-163 / DSM 7039 / HB27), this protein is Type IV narrow pilus major component PilA5 (pilA5).